The chain runs to 476 residues: Cysteine--tRNA ligase (476 aa).

C28 contacts Zn(2+). The 'HIGH' region motif lies at 30-40 (PTVYDNTHLGH). Zn(2+) contacts are provided by C208, H233, and E237. Residues 265-269 (KMSKS) carry the 'KMSKS' region motif. Residue K268 coordinates ATP.

It belongs to the class-I aminoacyl-tRNA synthetase family. Zn(2+) serves as cofactor.

Its subcellular location is the cytoplasm. The enzyme catalyses tRNA(Cys) + L-cysteine + ATP = L-cysteinyl-tRNA(Cys) + AMP + diphosphate. This is Cysteine--tRNA ligase from Methanococcus maripaludis (strain DSM 14266 / JCM 13030 / NBRC 101832 / S2 / LL).